We begin with the raw amino-acid sequence, 839 residues long: MKGKKDGLNKQVHIYSIDTSAFYNDQENKLHNKILKSYRYRDHLRKLEHVDKKHKKYITQRIISLKEKLYNAFNDHNQIRTLRTDSLKDNNVISLFDSVLTRTLGIKENSLSEEIMVVQTYHFQILRDIIDKGFIHNNEKYVYFTSSAGQIRTKKSCFIKQSTLDKYQNALTCGLSVEHINAQGGSSINKWNSYMALSNSASSSWEIDIDKAIVVNDLETNVSSLVDYIDRDTYEITRKIMDIPIEHTDGCGMMLPSLSQKSFMVRLPWVKGLLVPFDFRKFAEKHSSFIVKDVYGKEWDIIKDDIQIIFTKSQFKMWKYYDSWDDYRYKFKKYGCLGAKLNEEDPSVEGKLTYQMLQTLTDITDEELKQISSKTVSEITQLGTDKETMMKVLGATEKNKHKTSLQEALLIYPELLNDDHTKEIIKNKKKSMIKDAKSGKLLVSDARYTYLCPDLYAFCERLFLGIESPKGLLSGSDVHCSLYDEGYIDILRSPHLFREHGVRWNKKNEEYEKWFITPGVYTSIHDPISKLLQFDNDGDKALIISDELIVNIAKRNMADIVPLYYEMSVAQKQEINSRNIYEALTLAYGINIGEYSNNITKIWNSDNINLDVIKWLCMENNFTIDFAKTLFMPTRPDHVDEKIKDYIKNKVPHFFINAKDKEEHSVESINESTVNKLDSIIPSDRINFAAVAGKFDYRFLLKNKEIKLNEAVINEYKRLDRNKKWLMNDEEAKPGQKLYVYKIIKQKLLEIHNDDGFITDVLVKHLYKKKSKYKSTLWECFGDIVLENIKHNLKTFKGCCICGKAFKPTSNKAKYCQSCGKKKERDKYKKYNKKRINHR.

The Mg(2+) site is built by Asp535, Asp537, and Asp539.

This sequence belongs to the YRH RNA polymerase family. A divalent metal cation is required as a cofactor.

It catalyses the reaction RNA(n) + a ribonucleoside 5'-triphosphate = RNA(n+1) + diphosphate. Functionally, a single subunit DNA-dependent RNA polymerase (RNAP) that catalyzes the transcription of DNA into RNA using the four ribonucleoside triphosphates (rNTPs) as substrates. The enzyme is more highly processive than the multisubunit RNAP from E.coli but is considerably more error-prone. It has no detectable proof-reading function but can perform pyrophosphorolysis. Probably transcribes the late genes of the SPbeta phage starting from yonK. The polypeptide is DNA-directed RNA polymerase YonO (yonO) (Bacillus pumilus (Bacillus mesentericus)).